Here is a 469-residue protein sequence, read N- to C-terminus: 3-isopropylmalate dehydratase large subunit (469 aa).

3 residues coordinate [4Fe-4S] cluster: Cys-347, Cys-410, and Cys-413.

This sequence belongs to the aconitase/IPM isomerase family. LeuC type 1 subfamily. As to quaternary structure, heterodimer of LeuC and LeuD. Requires [4Fe-4S] cluster as cofactor.

It carries out the reaction (2R,3S)-3-isopropylmalate = (2S)-2-isopropylmalate. The protein operates within amino-acid biosynthesis; L-leucine biosynthesis; L-leucine from 3-methyl-2-oxobutanoate: step 2/4. In terms of biological role, catalyzes the isomerization between 2-isopropylmalate and 3-isopropylmalate, via the formation of 2-isopropylmaleate. This is 3-isopropylmalate dehydratase large subunit from Ralstonia nicotianae (strain ATCC BAA-1114 / GMI1000) (Ralstonia solanacearum).